A 229-amino-acid polypeptide reads, in one-letter code: MSELTNTEKRAVILLSGGLDSATVVAMARAEGYACYTMSFDYGQRHRAELDAAARVARDLGAVEHKVIGLNLNGIGGSALTDSSIAVPESPSEGIPITYVPARNTVFLSLALGWAEVLGARDIFIGVNAVDYSGYPDCRPEFVESFERMANLATKAGVEGQGFTIRAPLQNLSKSDIVKAGAALGVDYSLTVSCYQADDQGRACGKCDSCRLRTEGFTAAGMADPTRYF.

Residue 15–25 participates in ATP binding; sequence LSGGLDSATVV. Positions 194, 204, 207, and 210 each coordinate Zn(2+).

Belongs to the QueC family. Zn(2+) is required as a cofactor.

It carries out the reaction 7-carboxy-7-deazaguanine + NH4(+) + ATP = 7-cyano-7-deazaguanine + ADP + phosphate + H2O + H(+). Its pathway is purine metabolism; 7-cyano-7-deazaguanine biosynthesis. In terms of biological role, catalyzes the ATP-dependent conversion of 7-carboxy-7-deazaguanine (CDG) to 7-cyano-7-deazaguanine (preQ(0)). In Pseudomonas savastanoi pv. phaseolicola (strain 1448A / Race 6) (Pseudomonas syringae pv. phaseolicola (strain 1448A / Race 6)), this protein is 7-cyano-7-deazaguanine synthase.